The primary structure comprises 311 residues: uncharacterized protein (311 aa).

Transmembrane regions (helical) follow at residues 13-33 (STAV…GFFS), 41-61 (FELV…CWLA), 76-96 (LQTL…FKSF), 103-123 (IAIS…SFFY), 128-148 (NVIS…ISGI), 157-177 (LMGS…FTTL), 192-212 (FLQT…GAFA), 218-238 (NWIM…LLFF), 248-268 (FISI…TVFT), and 272-292 (PDLY…LTLV). 2 consecutive EamA domains span residues 24–147 (VIFG…LISG) and 166–292 (VLAA…LTLV).

Belongs to the EamA transporter family.

Its subcellular location is the cell membrane. This is an uncharacterized protein from Bacillus subtilis (strain 168).